We begin with the raw amino-acid sequence, 119 residues long: Putative nitrilase-like protein YIL165C (119 aa).

Residues M1–T82 enclose the CN hydrolase domain. Residue D21 is the Proton acceptor of the active site.

Belongs to the carbon-nitrogen hydrolase superfamily. Nitrilase family.

The sequence is that of Putative nitrilase-like protein YIL165C from Saccharomyces cerevisiae (strain ATCC 204508 / S288c) (Baker's yeast).